A 76-amino-acid chain; its full sequence is Virulence-associated protein VagC (76 aa).

The SpoVT-AbrB domain occupies 4–45 (VSIFKNGNNRAIRLPRDLDFEGVSELEIVREGDSIILRPVRP).

Belongs to the VapB family.

The chain is Virulence-associated protein VagC (vagC) from Salmonella dublin.